Reading from the N-terminus, the 136-residue chain is Large ribosomal subunit protein uL16 (136 aa).

This sequence belongs to the universal ribosomal protein uL16 family. In terms of assembly, part of the 50S ribosomal subunit.

Functionally, binds 23S rRNA and is also seen to make contacts with the A and possibly P site tRNAs. The sequence is that of Large ribosomal subunit protein uL16 from Shigella flexneri.